Reading from the N-terminus, the 312-residue chain is Porphobilinogen deaminase (312 aa).

The residue at position 241 (C241) is an S-(dipyrrolylmethanemethyl)cysteine.

The protein belongs to the HMBS family. As to quaternary structure, monomer. Dipyrromethane is required as a cofactor.

The enzyme catalyses 4 porphobilinogen + H2O = hydroxymethylbilane + 4 NH4(+). The protein operates within porphyrin-containing compound metabolism; protoporphyrin-IX biosynthesis; coproporphyrinogen-III from 5-aminolevulinate: step 2/4. It participates in porphyrin-containing compound metabolism; chlorophyll biosynthesis. Functionally, tetrapolymerization of the monopyrrole PBG into the hydroxymethylbilane pre-uroporphyrinogen in several discrete steps. The protein is Porphobilinogen deaminase of Chlorobaculum tepidum (strain ATCC 49652 / DSM 12025 / NBRC 103806 / TLS) (Chlorobium tepidum).